The primary structure comprises 445 residues: UPF0210 protein SSU05_0296 (445 aa).

The protein belongs to the UPF0210 family. Homodimer.

This chain is UPF0210 protein SSU05_0296, found in Streptococcus suis (strain 05ZYH33).